The chain runs to 239 residues: Fibroblast growth factor 3 (239 aa).

The first 17 residues, 1–17, serve as a signal peptide directing secretion; that stretch reads MGLIWLLLLSLLEPGWP. Asn-65 is a glycosylation site (N-linked (GlcNAc...) asparagine). The tract at residues 193–239 is disordered; that stretch reads QLQSGLPRPPGKGVQPRRRRQKQSPDNLEPSHVQASRLGSQLEASAH. Positions 225-239 are enriched in polar residues; sequence VQASRLGSQLEASAH.

It belongs to the heparin-binding growth factors family. Interacts with FGFR1 and FGFR2. Affinity between fibroblast growth factors (FGFs) and their receptors is increased by heparan sulfate glycosaminoglycans that function as coreceptors.

It localises to the secreted. Plays an important role in the regulation of embryonic development, cell proliferation, and cell differentiation. Required for normal ear development. This chain is Fibroblast growth factor 3 (FGF3), found in Homo sapiens (Human).